A 201-amino-acid chain; its full sequence is Protein GrpE (201 aa).

Belongs to the GrpE family. In terms of assembly, homodimer.

The protein resides in the cytoplasm. Functionally, participates actively in the response to hyperosmotic and heat shock by preventing the aggregation of stress-denatured proteins, in association with DnaK and GrpE. It is the nucleotide exchange factor for DnaK and may function as a thermosensor. Unfolded proteins bind initially to DnaJ; upon interaction with the DnaJ-bound protein, DnaK hydrolyzes its bound ATP, resulting in the formation of a stable complex. GrpE releases ADP from DnaK; ATP binding to DnaK triggers the release of the substrate protein, thus completing the reaction cycle. Several rounds of ATP-dependent interactions between DnaJ, DnaK and GrpE are required for fully efficient folding. This Shewanella frigidimarina (strain NCIMB 400) protein is Protein GrpE.